The primary structure comprises 304 residues: Peptidyl-prolyl cis-trans isomerase FKBP35 (304 aa).

The 90-residue stretch at 37-126 (GNEVTVHYVG…LFEIELLSFR (90 aa)) folds into the PPIase FKBP-type domain. TPR repeat units lie at residues 144 to 177 (AFDI…FIHT), 194 to 227 (ISCN…DKNN), and 228 to 261 (VKAL…NPNN).

The protein belongs to the FKBP-type PPIase family. As to quaternary structure, homodimer. Interacts (via TPR repeats) with HSP90 (probably via MEEVD motif).

The protein resides in the cytoplasm. It localises to the nucleus. It carries out the reaction [protein]-peptidylproline (omega=180) = [protein]-peptidylproline (omega=0). With respect to regulation, inhibited by FK506 and its derivates, such as ascomycin, and rapamycin. FK506 and rapamycin inhibit peptidylprolyl isomerase activity but not chaperone activity. Inhibited by N-(2-ethyl-phenyl)-2-(3H-imidazao [4, 5-b] pyridin-2-yl-sulfanyl)-acetamide (D44). Not inhibited by cyclosporin A. Inhibition of calcineurin phosphatase activity is enhanced by FK506. Its function is as follows. Has peptidylprolyl isomerase (PPIase) and co-chaperone activities. Assists protein folding by catalyzing the peptidyl conversion of cis and trans rotamers of the prolyl amide bond of protein substrates. Inhibits calcineurin phosphatase activity in vitro. Plays an essential role in merozoite egress from host erythrocytes. The sequence is that of Peptidyl-prolyl cis-trans isomerase FKBP35 from Plasmodium falciparum (isolate 3D7).